A 353-amino-acid chain; its full sequence is MRAILPIPVLIAWAMVVCGGAYAVTTCSGAATATADASQQDLAALKARFRRPESVPHPKANPLTPEKVALGKALFFDPRLSRSGSVSCATCHNPSLGWSDGLTRAVGFGMVPLPRRTPPVLNLAWGTAFQWDGRADSLEAQARMPITAPDEMNMSMDLVVERLKAVPGYAPLFRNAFGSEEPIGARHVTAALATFQRTLVSGEAPFDRWALGDESAIGADAKRGFALFTGKAGCAACHSTWRFTDDSFHDIGLKAGNDLGRGKFAPPSVTAMRYAFKTPSLRDLRMEGPYMHDGQLGSLEAVLDHYIKGGEKRPSLSFEMKPFEMSERERRDLVAFLETLKAEPAAITLPQLP.

The signal sequence occupies residues 1-23; it reads MRAILPIPVLIAWAMVVCGGAYA. The heme c site is built by Cys-88, Cys-91, His-92, Cys-234, Cys-237, His-238, and His-292.

In terms of processing, binds 2 heme c groups covalently per subunit.

It is found in the periplasm. The protein operates within one-carbon metabolism; methylamine degradation. Involved in methylamine metabolism. Essential for the maturation of the beta subunit of MADH, presumably via a step in the biosynthesis of tryptophan tryptophylquinone (TTQ), the cofactor of MADH. The protein is Methylamine utilization protein MauG (mauG) of Methylorubrum extorquens (strain ATCC 14718 / DSM 1338 / JCM 2805 / NCIMB 9133 / AM1) (Methylobacterium extorquens).